The following is a 652-amino-acid chain: DNA ligase (652 aa).

NAD(+) is bound by residues 29–33 (DAEYD), 78–79 (SL), and E107. Residue K109 is the N6-AMP-lysine intermediate of the active site. Positions 130, 164, 278, and 302 each coordinate NAD(+). Positions 395, 398, 413, and 418 each coordinate Zn(2+). Positions 577 to 652 (ASDAALTGMT…IKDEAWLESL (76 aa)) constitute a BRCT domain.

The protein belongs to the NAD-dependent DNA ligase family. LigA subfamily. It depends on Mg(2+) as a cofactor. Requires Mn(2+) as cofactor.

It carries out the reaction NAD(+) + (deoxyribonucleotide)n-3'-hydroxyl + 5'-phospho-(deoxyribonucleotide)m = (deoxyribonucleotide)n+m + AMP + beta-nicotinamide D-nucleotide.. Functionally, DNA ligase that catalyzes the formation of phosphodiester linkages between 5'-phosphoryl and 3'-hydroxyl groups in double-stranded DNA using NAD as a coenzyme and as the energy source for the reaction. It is essential for DNA replication and repair of damaged DNA. This Streptococcus mutans serotype c (strain ATCC 700610 / UA159) protein is DNA ligase.